A 157-amino-acid polypeptide reads, in one-letter code: Ribonuclease H (157 aa).

Residues 1–146 (MPDLVAYTDG…ADELARAGMA (146 aa)) enclose the RNase H type-1 domain. Residues Asp-9, Glu-52, Asp-74, and Asp-138 each coordinate Mg(2+).

Belongs to the RNase H family. As to quaternary structure, monomer. It depends on Mg(2+) as a cofactor.

The protein resides in the cytoplasm. It catalyses the reaction Endonucleolytic cleavage to 5'-phosphomonoester.. Its function is as follows. Endonuclease that specifically degrades the RNA of RNA-DNA hybrids. The protein is Ribonuclease H of Jannaschia sp. (strain CCS1).